Here is a 343-residue protein sequence, read N- to C-terminus: tRNA N6-adenosine threonylcarbamoyltransferase (343 aa).

Histidine 120 and histidine 124 together coordinate Fe cation. Residues 142-146 (VVSGG), aspartate 175, glycine 188, aspartate 192, and asparagine 281 contribute to the substrate site. Aspartate 309 lines the Fe cation pocket.

This sequence belongs to the KAE1 / TsaD family. Fe(2+) serves as cofactor.

The protein resides in the cytoplasm. The enzyme catalyses L-threonylcarbamoyladenylate + adenosine(37) in tRNA = N(6)-L-threonylcarbamoyladenosine(37) in tRNA + AMP + H(+). In terms of biological role, required for the formation of a threonylcarbamoyl group on adenosine at position 37 (t(6)A37) in tRNAs that read codons beginning with adenine. Is involved in the transfer of the threonylcarbamoyl moiety of threonylcarbamoyl-AMP (TC-AMP) to the N6 group of A37, together with TsaE and TsaB. TsaD likely plays a direct catalytic role in this reaction. This chain is tRNA N6-adenosine threonylcarbamoyltransferase, found in Halalkalibacterium halodurans (strain ATCC BAA-125 / DSM 18197 / FERM 7344 / JCM 9153 / C-125) (Bacillus halodurans).